A 179-amino-acid chain; its full sequence is Inner membrane-spanning protein YciB (179 aa).

The next 5 membrane-spanning stretches (helical) occupy residues 22-42 (IYAA…YSWV), 50-70 (MALI…FFHN), 76-96 (WKVT…QWVM), 121-141 (LAWA…AFWL), and 149-169 (FKVF…GIYI).

Belongs to the YciB family.

It is found in the cell inner membrane. Plays a role in cell envelope biogenesis, maintenance of cell envelope integrity and membrane homeostasis. This Klebsiella pneumoniae subsp. pneumoniae (strain ATCC 700721 / MGH 78578) protein is Inner membrane-spanning protein YciB.